We begin with the raw amino-acid sequence, 109 residues long: uncharacterized protein (109 aa).

Residues 63–109 (DPSTWEPEEHETEHCRGHTLPEKKQKPQGGHGSDKDEDKGNCGCDHC) form a disordered region. 2 stretches are compositionally biased toward basic and acidic residues: residues 73-87 (ETEHCRGHTLPEKKQ) and 94-109 (GSDKDEDKGNCGCDHC).

This is an uncharacterized protein from Caenorhabditis elegans.